The following is a 110-amino-acid chain: Large ribosomal subunit protein uL22 (110 aa).

This sequence belongs to the universal ribosomal protein uL22 family. Part of the 50S ribosomal subunit.

Functionally, this protein binds specifically to 23S rRNA; its binding is stimulated by other ribosomal proteins, e.g. L4, L17, and L20. It is important during the early stages of 50S assembly. It makes multiple contacts with different domains of the 23S rRNA in the assembled 50S subunit and ribosome. Its function is as follows. The globular domain of the protein is located near the polypeptide exit tunnel on the outside of the subunit, while an extended beta-hairpin is found that lines the wall of the exit tunnel in the center of the 70S ribosome. The polypeptide is Large ribosomal subunit protein uL22 (Paraburkholderia phytofirmans (strain DSM 17436 / LMG 22146 / PsJN) (Burkholderia phytofirmans)).